A 182-amino-acid chain; its full sequence is UPF0397 protein VV2_1534 (182 aa).

The next 5 membrane-spanning stretches (helical) occupy residues 8-28 (VVVI…MFGI), 41-61 (AVLA…VGFI), 72-92 (WGVW…IGLF), 110-130 (FSLF…CSAF), and 146-166 (QLTI…YFIL).

It belongs to the UPF0397 family.

Its subcellular location is the cell membrane. The sequence is that of UPF0397 protein VV2_1534 from Vibrio vulnificus (strain CMCP6).